The chain runs to 432 residues: Golgin subfamily A member 6-like protein 9 (432 aa).

Pro residues predominate over residues 1–11 (MWPQPRLPPHP). Disordered regions lie at residues 1–77 (MWPQ…YGEG) and 349–411 (KELE…AGGA). A compositionally biased stretch (polar residues) spans 51–62 (NGSSPDTFTSGG). A coiled-coil region spans residues 157-354 (SKMEQLQDET…EQQVKELEKS (198 aa)). Over residues 349-362 (KELEKSGGAEEPRG) the composition is skewed to basic and acidic residues. Low complexity predominate over residues 366-381 (AAAARPVAGAPVPQGA).

Belongs to the GOLGA6 family.

The protein is Golgin subfamily A member 6-like protein 9 of Homo sapiens (Human).